The chain runs to 89 residues: Small ribosomal subunit protein uS15 (89 aa).

Belongs to the universal ribosomal protein uS15 family. Part of the 30S ribosomal subunit. Forms a bridge to the 50S subunit in the 70S ribosome, contacting the 23S rRNA.

Its function is as follows. One of the primary rRNA binding proteins, it binds directly to 16S rRNA where it helps nucleate assembly of the platform of the 30S subunit by binding and bridging several RNA helices of the 16S rRNA. In terms of biological role, forms an intersubunit bridge (bridge B4) with the 23S rRNA of the 50S subunit in the ribosome. This chain is Small ribosomal subunit protein uS15, found in Rhizobium meliloti (strain 1021) (Ensifer meliloti).